A 161-amino-acid polypeptide reads, in one-letter code: MHKTAIYPGTFDPLTNGHMDIIRRASMIFDTLIVAVAKSATKEPMFPLSEREEMLRLATRECPSVRVESFDTLLADFAQERGACILVRGLRAVSDFEYELQMGYANASLNPALETIYLMPSLQNAFISSSVIRSILLHKGKISHLVPPVVCEYIQKRRSCM.

Thr10 contacts substrate. ATP-binding positions include 10-11 (TF) and His18. Lys42, Leu74, and Arg88 together coordinate substrate. Residues 89 to 91 (GLR), Glu99, and 124 to 130 (NAFISSS) each bind ATP.

The protein belongs to the bacterial CoaD family. Homohexamer. Mg(2+) is required as a cofactor.

The protein resides in the cytoplasm. The enzyme catalyses (R)-4'-phosphopantetheine + ATP + H(+) = 3'-dephospho-CoA + diphosphate. Its pathway is cofactor biosynthesis; coenzyme A biosynthesis; CoA from (R)-pantothenate: step 4/5. In terms of biological role, reversibly transfers an adenylyl group from ATP to 4'-phosphopantetheine, yielding dephospho-CoA (dPCoA) and pyrophosphate. The protein is Phosphopantetheine adenylyltransferase of Wolinella succinogenes (strain ATCC 29543 / DSM 1740 / CCUG 13145 / JCM 31913 / LMG 7466 / NCTC 11488 / FDC 602W) (Vibrio succinogenes).